A 316-amino-acid chain; its full sequence is Arginine transport system permease protein ArgU (316 aa).

Positions 1-14 (MSDLNQGPGASTAQ) are enriched in polar residues. The interval 1-20 (MSDLNQGPGASTAQPKPIEA) is disordered. 6 helical membrane passes run 29–49 (WVAA…ALNN), 74–94 (IALT…LAVM), 108–128 (LYLW…WGLL), 151–171 (MFLL…AEIV), 217–237 (LISM…LELY), and 251–271 (VPML…LMVG). The ABC transmembrane type-1 domain maps to 70 to 274 (ALHTIALTLL…TSILMVGQYY (205 aa)).

This sequence belongs to the binding-protein-dependent transport system permease family. As to quaternary structure, the complex is probably composed of two ATP-binding proteins (ArgV), two transmembrane proteins (ArgU) and a solute-binding protein (ArgT).

It localises to the cell membrane. Its function is as follows. Part of the ABC transporter complex ArgTUV involved in L-arginine import. May also transport L-citrulline. Probably responsible for the translocation of the substrate across the membrane. The protein is Arginine transport system permease protein ArgU of Corynebacterium glutamicum (strain ATCC 13032 / DSM 20300 / JCM 1318 / BCRC 11384 / CCUG 27702 / LMG 3730 / NBRC 12168 / NCIMB 10025 / NRRL B-2784 / 534).